A 64-amino-acid chain; its full sequence is Conotoxin Cal6.24 (64 aa).

A signal peptide spans 1–22; the sequence is MKLTCVMIVAVLVLTVCKVVTS. 3 cysteine pairs are disulfide-bonded: cysteine 32-cysteine 50, cysteine 40-cysteine 54, and cysteine 49-cysteine 60.

In terms of tissue distribution, expressed by the venom duct.

The protein resides in the secreted. Functionally, probable neurotoxin. The protein is Conotoxin Cal6.24 of Californiconus californicus (California cone).